The primary structure comprises 896 residues: Bifunctional glutamine synthetase adenylyltransferase/adenylyl-removing enzyme (896 aa).

The tract at residues 1–411 (MSDNRLDTAR…LFNEILSEPE (411 aa)) is adenylyl removase. The adenylyl transferase stretch occupies residues 417-896 (NSEWQWAWQD…EVFGEEAATV (480 aa)).

Belongs to the GlnE family. Requires Mg(2+) as cofactor.

It carries out the reaction [glutamine synthetase]-O(4)-(5'-adenylyl)-L-tyrosine + phosphate = [glutamine synthetase]-L-tyrosine + ADP. The catalysed reaction is [glutamine synthetase]-L-tyrosine + ATP = [glutamine synthetase]-O(4)-(5'-adenylyl)-L-tyrosine + diphosphate. Involved in the regulation of glutamine synthetase GlnA, a key enzyme in the process to assimilate ammonia. When cellular nitrogen levels are high, the C-terminal adenylyl transferase (AT) inactivates GlnA by covalent transfer of an adenylyl group from ATP to specific tyrosine residue of GlnA, thus reducing its activity. Conversely, when nitrogen levels are low, the N-terminal adenylyl removase (AR) activates GlnA by removing the adenylyl group by phosphorolysis, increasing its activity. The regulatory region of GlnE binds the signal transduction protein PII (GlnB) which indicates the nitrogen status of the cell. This chain is Bifunctional glutamine synthetase adenylyltransferase/adenylyl-removing enzyme, found in Neisseria meningitidis serogroup B (strain ATCC BAA-335 / MC58).